The primary structure comprises 318 residues: Transaldolase (318 aa).

Lys132 functions as the Schiff-base intermediate with substrate in the catalytic mechanism.

The protein belongs to the transaldolase family. Type 1 subfamily. Homodimer.

Its subcellular location is the cytoplasm. The catalysed reaction is D-sedoheptulose 7-phosphate + D-glyceraldehyde 3-phosphate = D-erythrose 4-phosphate + beta-D-fructose 6-phosphate. It functions in the pathway carbohydrate degradation; pentose phosphate pathway; D-glyceraldehyde 3-phosphate and beta-D-fructose 6-phosphate from D-ribose 5-phosphate and D-xylulose 5-phosphate (non-oxidative stage): step 2/3. In terms of biological role, transaldolase is important for the balance of metabolites in the pentose-phosphate pathway. In Shewanella pealeana (strain ATCC 700345 / ANG-SQ1), this protein is Transaldolase.